A 609-amino-acid polypeptide reads, in one-letter code: Laccase-1 (609 aa).

The N-terminal stretch at methionine 1 to alanine 20 is a signal peptide. Residues valine 45–arginine 141 form the Plastocyanin-like 1 domain. N-linked (GlcNAc...) asparagine glycosylation is present at asparagine 75. Positions 79, 81, 123, and 125 each coordinate Cu cation. The N-linked (GlcNAc...) asparagine glycan is linked to asparagine 257. One can recognise a Plastocyanin-like 2 domain in the interval threonine 270–valine 372. N-linked (GlcNAc...) asparagine glycans are attached at residues asparagine 403, asparagine 443, and asparagine 486. The 140-residue stretch at serine 463–aspartate 602 folds into the Plastocyanin-like 3 domain. Residues histidine 508, histidine 511, and histidine 513 each coordinate Cu cation. N-linked (GlcNAc...) asparagine glycosylation is found at asparagine 531 and asparagine 546. Residues histidine 585, cysteine 586, histidine 587, and histidine 591 each coordinate Cu cation.

It belongs to the multicopper oxidase family. The cofactor is Cu cation.

It localises to the secreted. The enzyme catalyses 4 hydroquinone + O2 = 4 benzosemiquinone + 2 H2O. Required for the conversion of the yellow polyketide pigment synthesized by wA to the conidial green pigment. This Emericella nidulans (strain FGSC A4 / ATCC 38163 / CBS 112.46 / NRRL 194 / M139) (Aspergillus nidulans) protein is Laccase-1 (yA).